Reading from the N-terminus, the 214-residue chain is Adenylate kinase (214 aa).

Position 10–15 (10–15) interacts with ATP; that stretch reads GAGKGT. An NMP region spans residues 30–59; that stretch reads STGDMLRAAVKAGTPLGLEAKKVMDAGQLV. AMP is bound by residues Thr31, Arg36, 57–59, 85–88, and Gln92; these read QLV and GFPR. The tract at residues 122–159 is LID; it reads GRRVHPGSGRVYHVVFNPPKVEGKDDVTGEDLAIRPDD. ATP-binding positions include Arg123 and 132–133; that span reads VY. Residues Arg156 and Arg167 each contribute to the AMP site. Residue Gln200 coordinates ATP.

Belongs to the adenylate kinase family. In terms of assembly, monomer.

The protein localises to the cytoplasm. The catalysed reaction is AMP + ATP = 2 ADP. It participates in purine metabolism; AMP biosynthesis via salvage pathway; AMP from ADP: step 1/1. Functionally, catalyzes the reversible transfer of the terminal phosphate group between ATP and AMP. Plays an important role in cellular energy homeostasis and in adenine nucleotide metabolism. In Shewanella putrefaciens (strain CN-32 / ATCC BAA-453), this protein is Adenylate kinase.